The sequence spans 1805 residues: Obscurin-like protein 1 (1805 aa).

A Phosphoserine modification is found at Ser-10. Residues 12–100 (PCFLRFPRPV…GEAYAAAAVT (89 aa)) form the Ig-like 1 domain. The tract at residues 17 to 19 (FPR) is interaction with TTN. A disulfide bridge links Cys-33 with Cys-84. The tract at residues 85–94 (RARNAAGEAY) is interaction with TTN. Residues 104 to 122 (PPAPEPEPQSSECPPPPPG) show a composition bias toward pro residues. A disordered region spans residues 104-131 (PPAPEPEPQSSECPPPPPGTGEGAPVFL). 3 Ig-like domains span residues 128-225 (PVFL…ALLQ), 240-330 (PPVR…QTLS), and 339-425 (PRLR…ANVT). Intrachain disulfides connect Cys-149–Cys-209, Cys-267–Cys-319, and Cys-362–Cys-412. One can recognise a Fibronectin type-III domain in the interval 517 to 615 (PPGPPVLVEM…FNGSAHLVPT (99 aa)). 10 consecutive Ig-like domains span residues 720–800 (PQDK…FSVT), 804–891 (PPVH…FTVT), 902–982 (PNGK…FTIT), 986–1075 (PPVR…VTVT), 1078–1165 (PERI…FNVS), 1176–1261 (PEAV…FNVQ), 1266–1351 (PPVK…ARLH), 1355–1442 (TELL…ARLS), 1536–1628 (PVTI…REVS), and 1702–1798 (PAQS…ADTQ). 6 cysteine pairs are disulfide-bonded: Cys-738/Cys-788, Cys-829/Cys-879, Cys-920/Cys-970, Cys-1011/Cys-1061, Cys-1103/Cys-1153, and Cys-1195/Cys-1245. A disulfide bridge connects residues Cys-1558 and Cys-1608.

In terms of assembly, component of the 3M complex, composed of core components CUL7, CCDC8 and OBSL1. Interacts with CCDC8. Interacts with CUL7; the interaction is direct. Interacts with FBXW8. Interacts (via N-terminal Ig-like domain) with TTN/titin (via C-terminal Ig-like domain); the interaction is direct. As to expression, expressed in granule neurons, with levels decreasing with neuronal maturation.

Its subcellular location is the cytoplasm. The protein localises to the perinuclear region. The protein resides in the golgi apparatus. Functionally, core component of the 3M complex, a complex required to regulate microtubule dynamics and genome integrity. It is unclear how the 3M complex regulates microtubules, it could act by controlling the level of a microtubule stabilizer. Acts as a regulator of the Cul7-RING(FBXW8) ubiquitin-protein ligase, playing a critical role in the ubiquitin ligase pathway that regulates Golgi morphogenesis and dendrite patterning in brain. Required to localize CUL7 to the Golgi apparatus in neurons. This is Obscurin-like protein 1 (Obsl1) from Rattus norvegicus (Rat).